We begin with the raw amino-acid sequence, 137 residues long: DNA-binding protein H-NS (137 aa).

Residues 13–65 (TLRAQARECTLETLEEMLEKLEVVVNERREEESAAAAEVEERTRKLQQYREML) adopt a coiled-coil conformation. Residues 112–117 (QGRTPA) mediate DNA binding.

This sequence belongs to the histone-like protein H-NS family. Homodimer that oligomerizes on DNA into higher-order complexes that form bridges between disparate regions of DNA compacting it. Interacts with Hha, YdgT and StpA.

It localises to the cytoplasm. It is found in the nucleoid. In terms of biological role, a DNA-binding protein implicated in transcriptional repression and chromosome organization and compaction. Binds AT-rich DNA, repressing its transcription; about 754/4438 tested genes (15%) bind to H-NS, 70% of these are AT-rich and correspond to horizontally transferred geness (HTG), thus playing a central role in silencing foreign genes. This offers the selective advantage of silencing foreign DNA. Binds nucleation sites in AT-rich DNA and bridges them, forming higher-order nucleoprotein complexes and condensing the chromosome. A subset of genes are repressed by H-NS in association with Hha and/or YdgT. This Salmonella typhimurium (strain 14028s / SGSC 2262) protein is DNA-binding protein H-NS (hns).